Here is a 71-residue protein sequence, read N- to C-terminus: Small, acid-soluble spore protein I (71 aa).

Belongs to the SspI family.

The protein resides in the spore core. The polypeptide is Small, acid-soluble spore protein I (Geobacillus sp. (strain WCH70)).